The chain runs to 377 residues: Succinyl-diaminopimelate desuccinylase (377 aa).

H68 serves as a coordination point for Zn(2+). D70 is a catalytic residue. D101 provides a ligand contact to Zn(2+). E135 serves as the catalytic Proton acceptor. 3 residues coordinate Zn(2+): E136, E164, and H350.

Belongs to the peptidase M20A family. DapE subfamily. As to quaternary structure, homodimer. Requires Zn(2+) as cofactor. The cofactor is Co(2+).

The enzyme catalyses N-succinyl-(2S,6S)-2,6-diaminopimelate + H2O = (2S,6S)-2,6-diaminopimelate + succinate. It functions in the pathway amino-acid biosynthesis; L-lysine biosynthesis via DAP pathway; LL-2,6-diaminopimelate from (S)-tetrahydrodipicolinate (succinylase route): step 3/3. Catalyzes the hydrolysis of N-succinyl-L,L-diaminopimelic acid (SDAP), forming succinate and LL-2,6-diaminopimelate (DAP), an intermediate involved in the bacterial biosynthesis of lysine and meso-diaminopimelic acid, an essential component of bacterial cell walls. The sequence is that of Succinyl-diaminopimelate desuccinylase from Acinetobacter baumannii (strain AB0057).